Here is a 480-residue protein sequence, read N- to C-terminus: Immune evasion protein OPG047 (480 aa).

The BTB domain occupies 10–90 (CKNILALSMT…SYTGKVYIDS (81 aa)). The region spanning 125–223 (CVECYMMGIE…NYLSPRGINN (99 aa)) is the BACK domain. 5 Kelch repeats span residues 273 to 319 (VVYL…PANN), 320 to 363 (KLYV…SINN), 365 to 408 (IYVM…VFGR), 410 to 447 (LFLV…IVDN), and 448 to 480 (KLLL…WDGK).

It belongs to the orthopoxvirus OPG047 family.

Might have a role in the suppression of host immune response. The chain is Immune evasion protein OPG047 (OPG047) from Vaccinia virus (strain Copenhagen) (VACV).